A 427-amino-acid chain; its full sequence is 3-phosphoshikimate 1-carboxyvinyltransferase (427 aa).

Residues Lys22, Ser23, and Arg27 each contribute to the 3-phosphoshikimate site. Lys22 is a binding site for phosphoenolpyruvate. Phosphoenolpyruvate-binding residues include Gly96 and Arg124. Residues Ser169, Ser170, Gln171, Ser197, Asp313, Asn336, and Lys340 each contribute to the 3-phosphoshikimate site. Gln171 lines the phosphoenolpyruvate pocket. Residue Asp313 is the Proton acceptor of the active site. 3 residues coordinate phosphoenolpyruvate: Arg344, Arg386, and Lys411.

The protein belongs to the EPSP synthase family. Monomer.

It localises to the cytoplasm. It carries out the reaction 3-phosphoshikimate + phosphoenolpyruvate = 5-O-(1-carboxyvinyl)-3-phosphoshikimate + phosphate. Its pathway is metabolic intermediate biosynthesis; chorismate biosynthesis; chorismate from D-erythrose 4-phosphate and phosphoenolpyruvate: step 6/7. Catalyzes the transfer of the enolpyruvyl moiety of phosphoenolpyruvate (PEP) to the 5-hydroxyl of shikimate-3-phosphate (S3P) to produce enolpyruvyl shikimate-3-phosphate and inorganic phosphate. This Citrobacter koseri (strain ATCC BAA-895 / CDC 4225-83 / SGSC4696) protein is 3-phosphoshikimate 1-carboxyvinyltransferase.